A 117-amino-acid polypeptide reads, in one-letter code: Immunoglobulin kappa variable 1D-12 (117 aa).

The signal sequence occupies residues Met-1 to Cys-22. Positions Asp-23–Cys-45 are framework-1. The Ig-like domain maps to Ile-24–Pro-117. A disulfide bridge links Cys-45 with Cys-110. The segment at Arg-46–Ala-56 is complementarity-determining-1. Residues Trp-57–Tyr-71 are framework-2. The interval Ala-72–Ser-78 is complementarity-determining-2. The segment at Gly-79–Cys-110 is framework-3. The interval Gln-111–Pro-117 is complementarity-determining-3.

In terms of assembly, immunoglobulins are composed of two identical heavy chains and two identical light chains; disulfide-linked.

Its subcellular location is the secreted. It is found in the cell membrane. In terms of biological role, v region of the variable domain of immunoglobulin light chains that participates in the antigen recognition. Immunoglobulins, also known as antibodies, are membrane-bound or secreted glycoproteins produced by B lymphocytes. In the recognition phase of humoral immunity, the membrane-bound immunoglobulins serve as receptors which, upon binding of a specific antigen, trigger the clonal expansion and differentiation of B lymphocytes into immunoglobulins-secreting plasma cells. Secreted immunoglobulins mediate the effector phase of humoral immunity, which results in the elimination of bound antigens. The antigen binding site is formed by the variable domain of one heavy chain, together with that of its associated light chain. Thus, each immunoglobulin has two antigen binding sites with remarkable affinity for a particular antigen. The variable domains are assembled by a process called V-(D)-J rearrangement and can then be subjected to somatic hypermutations which, after exposure to antigen and selection, allow affinity maturation for a particular antigen. The sequence is that of Immunoglobulin kappa variable 1D-12 from Homo sapiens (Human).